Consider the following 615-residue polypeptide: 1-deoxy-D-xylulose-5-phosphate synthase (615 aa).

Residues H72 and G113–A115 each bind thiamine diphosphate. Residue D144 coordinates Mg(2+). Thiamine diphosphate is bound by residues G145–A146, N173, Y281, and E360. N173 is a binding site for Mg(2+).

This sequence belongs to the transketolase family. DXPS subfamily. Homodimer. Requires Mg(2+) as cofactor. The cofactor is thiamine diphosphate.

It carries out the reaction D-glyceraldehyde 3-phosphate + pyruvate + H(+) = 1-deoxy-D-xylulose 5-phosphate + CO2. Its pathway is metabolic intermediate biosynthesis; 1-deoxy-D-xylulose 5-phosphate biosynthesis; 1-deoxy-D-xylulose 5-phosphate from D-glyceraldehyde 3-phosphate and pyruvate: step 1/1. Catalyzes the acyloin condensation reaction between C atoms 2 and 3 of pyruvate and glyceraldehyde 3-phosphate to yield 1-deoxy-D-xylulose-5-phosphate (DXP). This Thermus thermophilus (strain ATCC 27634 / DSM 579 / HB8) protein is 1-deoxy-D-xylulose-5-phosphate synthase.